The primary structure comprises 503 residues: MDLIPSFSLETWVLLALSLVLLYQYATYSHGFFKKLGIPGPKPLPLFGNVLSYRKGMWSFDIECRKKYGNMWGLYDGPQPVLAITEPDMIKAVLVKECYSVFTNRRSLVPVGFMKKSVSLSEDEEWKRIRTQLSPNFTSGKLKEMFPIIKQYGDVLVKNLRQEAEKGKPVQLKEIFGAYGMDIIIATAFGVNVDSLNNPHDPFVSKANKLFRFDFLSPFLLSTVMFPFLTQLYEMLSISIFPRDSLKFFTKFVKKTKENHLESNKKQRVNFLQMMLNSQNFKDTESHKALSDVEILAQSIIFIFAGYETSSSTLSCIMYSLATHPDVQKKLHQEIDKTLPNKAFPTYDVMMEMEYLDMVVNETLRLYPVANRIERMSKKDFEINGMSFPKGTLVMIPSFALHRDSKYWPEPDEFRPERFSKKNKENIDPYIYMPFGNGPRNCIGRRMALMNLKLALIRLLQNFSFYPCKETQIPLRLSSEALLQPEKPLILKVVSRDETIRGA.

Residue C442 participates in heme binding.

It belongs to the cytochrome P450 family. Requires heme as cofactor.

Its subcellular location is the endoplasmic reticulum membrane. It localises to the microsome membrane. It carries out the reaction an organic molecule + reduced [NADPH--hemoprotein reductase] + O2 = an alcohol + oxidized [NADPH--hemoprotein reductase] + H2O + H(+). Cytochromes P450 are a group of heme-thiolate monooxygenases. In liver microsomes, this enzyme is involved in an NADPH-dependent electron transport pathway. It oxidizes a variety of structurally unrelated compounds, including steroids, fatty acids, and xenobiotics. The protein is Cytochrome P450 3A15 (CYP3A15) of Cavia porcellus (Guinea pig).